Consider the following 752-residue polypeptide: Pre-mRNA-processing factor 39 (752 aa).

Positions 1 to 148 are disordered; it reads MEDSGESMTG…DPAAPQEPEL (148 aa). The segment covering 28–42 has biased composition (polar residues); the sequence is TTGTDDVTGLSTSDL. 3 stretches are compositionally biased toward low complexity: residues 43 to 56, 76 to 94, and 133 to 148; these read TTEQ…QTQP, QSAS…PPES, and EPAA…EPEL. 3 HAT repeats span residues 180–212, 214–246, and 254–289; these read NHLL…IERK, GYIQ…FLRE, and EAES…WETE. Residues 347–374 form a disordered region; it reads NKPSGDEDAETEAPGEELPPGTEDLPDP. Residues 352–361 show a composition bias toward acidic residues; it reads DEDAETEAPG. 2 HAT repeats span residues 408-440 and 442-474; these read AFEE…FELE and GTPE…YLES. Positions 678–699 are enriched in basic and acidic residues; that stretch reads SFKRKAENGSEEPDAKRQRTDD. The segment at 678–703 is disordered; sequence SFKRKAENGSEEPDAKRQRTDDQSVA. The stretch at 700–731 is one HAT 6 repeat; the sequence is QSVASGQMMDMQANHAGYNYNNWYQYNSWGSQ.

This sequence belongs to the PRP39 family.

Its subcellular location is the nucleus. Involved in pre-mRNA splicing. In Danio rerio (Zebrafish), this protein is Pre-mRNA-processing factor 39 (prpf39).